Here is a 186-residue protein sequence, read N- to C-terminus: Ribosome-recycling factor (186 aa).

Belongs to the RRF family.

It localises to the cytoplasm. In terms of biological role, responsible for the release of ribosomes from messenger RNA at the termination of protein biosynthesis. May increase the efficiency of translation by recycling ribosomes from one round of translation to another. This chain is Ribosome-recycling factor, found in Chlorobium luteolum (strain DSM 273 / BCRC 81028 / 2530) (Pelodictyon luteolum).